Here is a 341-residue protein sequence, read N- to C-terminus: Probable alcohol acetyltransferase (341 aa).

A mitochondrion-targeting transit peptide spans 1–40 (MFASRILRNSAQTLKTELPHKETIKMAYDLHKPRSTAIRH). Positions 48–301 (PILFLHGIFG…NSNHDILDQR (254 aa)) constitute an AB hydrolase-1 domain. Residues S121, D145, and H295 each act as charge relay system in the active site.

This sequence belongs to the AB hydrolase superfamily.

Its subcellular location is the mitochondrion. In terms of biological role, probable alcohol acetyltransferase that uses acetyl-CoA to synthesize acetate esters from various alcohols. Not involved in the synthesis of ethyl acetate. In Wickerhamomyces anomalus (strain ATCC 58044 / CBS 1984 / NCYC 433 / NRRL Y-366-8) (Yeast), this protein is Probable alcohol acetyltransferase (EAT2).